We begin with the raw amino-acid sequence, 423 residues long: Ankyrin repeat and SAM domain-containing protein 4B (423 aa).

Residues 1 to 251 (MSTRYHQAAS…PKDFKEKLHF (251 aa)) form a mediates localization to microvilli region. 3 ANK repeats span residues 31 to 60 (DGMTPTLLAAYHGNLEALEIICSRGGDPDK), 64 to 93 (WGNTPLHYAASNGHTHCISFLVNFGANIFA), and 97 to 126 (DLKSPLDAAASREQKECVALLDKAATVQNT). Residues 130-169 (KRVTRLKEQALKNARKQMKECERLQERHQNKMARTYSKED) are a coiled coil. Disordered regions lie at residues 158–181 (QNKMARTYSKEDSGTISSSHSTLS), 207–227 (KSKKNKDTTEQLEKDGRSGQR), and 303–335 (QRQGAAGTVEEEEEEEEEEEEEKREANGTAGDL). Positions 171–181 (GTISSSHSTLS) are enriched in low complexity. Residues 207 to 224 (KSKKNKDTTEQLEKDGRS) are compositionally biased toward basic and acidic residues. The interval 253 to 352 (VEEDDDVQHE…EWEEDAVDAT (100 aa)) is mediates interaction with MYO7B. Residues 301-335 (LFQRQGAAGTVEEEEEEEEEEEEEKREANGTAGDL) adopt a coiled-coil conformation. The segment covering 311 to 324 (VEEEEEEEEEEEEE) has biased composition (acidic residues). The SAM domain maps to 357–409 (FLQSQHLEEFLPIFMREQIDLEALLLCSDEDLQNIHMQLGPRKKVLSAIDKRK). The PDZ-binding; mediates interaction with USH1C motif lies at 421–423 (TSL).

In terms of assembly, part of the IMAC/intermicrovillar adhesion complex/intermicrovillar tip-link complex composed of ANKS4B, MYO7B, USH1C, CDHR2 and CDHR5. Interacts with USH1C; the interaction is direct and is required for ANKS4B localization to the tip of microvilli. Interacts with MYO7B; the interaction is direct. May interact with HSPA5. Cochlea, kidney, lung, liver, pancreas, salivary gland and small intestine (at protein level). Expressed in kidney, small intestine, pancreas, liver and colon. Not detected in heart, spleen and brain.

The protein localises to the cell projection. It is found in the microvillus. Functionally, as part of the intermicrovillar adhesion complex/IMAC plays a role in epithelial brush border differentiation, controlling microvilli organization and length. Plays a role in assembly of the complex. May play a role in cellular response to endoplasmic reticulum stress. The sequence is that of Ankyrin repeat and SAM domain-containing protein 4B from Mus musculus (Mouse).